Consider the following 340-residue polypeptide: 4-dimethylallyltryptophan N-methyltransferase easF (340 aa).

Belongs to the methyltransferase superfamily. As to quaternary structure, homodimer.

It catalyses the reaction 4-(3-methylbut-2-enyl)-L-tryptophan + S-adenosyl-L-methionine = 4-(3-methylbut-2-enyl)-L-abrine + S-adenosyl-L-homocysteine + H(+). Its pathway is alkaloid biosynthesis; ergot alkaloid biosynthesis. 4-dimethylallyltryptophan N-methyltransferase; part of the gene cluster that mediates the biosynthesis of fungal ergot alkaloid. DmaW catalyzes the first step of ergot alkaloid biosynthesis by condensing dimethylallyl diphosphate (DMAP) and tryptophan to form 4-dimethylallyl-L-tryptophan. The second step is catalyzed by the methyltransferase easF that methylates 4-dimethylallyl-L-tryptophan in the presence of S-adenosyl-L-methionine, resulting in the formation of 4-dimethylallyl-L-abrine. The catalase easC and the FAD-dependent oxidoreductase easE then transform 4-dimethylallyl-L-abrine to chanoclavine-I which is further oxidized by easD in the presence of NAD(+), resulting in the formation of chanoclavine-I aldehyde. Chanoclavine-I aldehyde is the precursor of ergoamides and ergopeptines in Clavicipitaceae, and clavine-type alcaloids such as fumiclavine in Trichocomaceae. However, the metabolites downstream of chanoclavine-I aldehyde in Arthrodermataceae have not been identified yet. This is 4-dimethylallyltryptophan N-methyltransferase easF from Trichophyton verrucosum (strain HKI 0517).